Here is a 173-residue protein sequence, read N- to C-terminus: Regulatory protein RecX (173 aa).

It belongs to the RecX family.

The protein localises to the cytoplasm. In terms of biological role, modulates RecA activity. This Mycobacterium marinum (strain ATCC BAA-535 / M) protein is Regulatory protein RecX.